An 85-amino-acid polypeptide reads, in one-letter code: MKTSVFAAILGLALFAVLCSGSELQEKDLKETLLSAIMETALEAQPEERECRYLFGGCKTTSDCCKHLGCKFRDKYCAWDFTFSK.

An N-terminal signal peptide occupies residues 1 to 21 (MKTSVFAAILGLALFAVLCSG). Residues 22–49 (SELQEKDLKETLLSAIMETALEAQPEER) constitute a propeptide that is removed on maturation. 3 disulfide bridges follow: Cys-51-Cys-65, Cys-58-Cys-70, and Cys-64-Cys-77. Residues 53–55 (YLF) are involved in active face.

It belongs to the neurotoxin 10 (Hwtx-1) family. 09 (HaTx) subfamily. As to expression, expressed by the venom gland.

The protein localises to the secreted. In terms of biological role, inhibits Kv2.1/KCNB1 and Kv4.2/KCND2 voltage-gated potassium channels. Acts as a gating modifier by shifting channel openings to more depolarized voltages and acts via the occupancy of multiple binding sites on the channel. The toxin binding sites are situated on the S3-S4 extracellular linker of the channel. At least two hanatoxin molecules can occupy the Kv2.1/KCNB1 channel, and maybe more (three or four). Can also inhibit calcium channels (Cav2.1/CACNA1A). Needs to partition into the membrane in order to bind to the channel. In Grammostola rosea (Chilean rose tarantula), this protein is Kappa-theraphotoxin-Gr1a.